The sequence spans 177 residues: 3-hydroxydecanoyl-[acyl-carrier-protein] dehydratase (177 aa).

His76 is an active-site residue.

Belongs to the thioester dehydratase family. FabA subfamily. In terms of assembly, homodimer.

It localises to the cytoplasm. The enzyme catalyses a (3R)-hydroxyacyl-[ACP] = a (2E)-enoyl-[ACP] + H2O. It catalyses the reaction (3R)-hydroxydecanoyl-[ACP] = (2E)-decenoyl-[ACP] + H2O. The catalysed reaction is (2E)-decenoyl-[ACP] = (3Z)-decenoyl-[ACP]. The protein operates within lipid metabolism; fatty acid biosynthesis. Its function is as follows. Necessary for the introduction of cis unsaturation into fatty acids. Catalyzes the dehydration of (3R)-3-hydroxydecanoyl-ACP to E-(2)-decenoyl-ACP and then its isomerization to Z-(3)-decenoyl-ACP. Can catalyze the dehydratase reaction for beta-hydroxyacyl-ACPs with saturated chain lengths up to 16:0, being most active on intermediate chain length. This chain is 3-hydroxydecanoyl-[acyl-carrier-protein] dehydratase, found in Actinobacillus succinogenes (strain ATCC 55618 / DSM 22257 / CCUG 43843 / 130Z).